The primary structure comprises 533 residues: MRARRVVAAAAVLLLFAVVAVARLDLDDDGDDSEVLDELLAVDEEEERGELGGGGEAAAAEAVRRAQSMVLVLDNDNARRAVEENAEVLLLGYAPWCERSAQLMPRFAEAAAALRAMGSAVAFAKLDGERYPKAASAVGVKGFPTVLLFVNGTEHQFTGLHTKDAIVTWVRKKTGAPASRIQSKDSAEEFLKKDQTFAVGLFKNFEGAEYEEFVKAATSENEVQFVETNDRNVAKILFPGIASEEQFLGLVKSEPEKFEKFNGAFEEKEIIQFVELNKFPLITVFTDLNSGKVYGSPIKLQVFTFAEAYDFEDLESMIQEVARGFKTKIMLIYVDTAEEKLAKPFLTLYGLEPEKPTVTAFDTSKGTKYLMEAEINAKNLQDFCLSLLEGTLPPYFRSEPVPEEKGPIEKVVGRTFDSSVLESPQNVFLEVHAPWCVDCEAISKNVEKLAKHFNDLGQTNLKFARIDASVNEHPKLQINNYPTLLLYPAQDKSNPIKLSKKSNLKDMAKFVKEKLQIADVETVAAGDIVKDEL.

The N-terminal stretch at Met1–Ala22 is a signal peptide. 2 consecutive Thioredoxin domains span residues Leu51–Thr196 and Leu387–Gln516. Cys97 serves as the catalytic Nucleophile. A glycan (N-linked (GlcNAc...) asparagine) is linked at Asn151. Residues Cys436 and Cys439 each act as nucleophile in the active site. Residues Cys436 and Cys439 are joined by a disulfide bond. Positions Lys530–Leu533 match the Prevents secretion from ER motif.

The protein belongs to the protein disulfide isomerase family.

Its subcellular location is the endoplasmic reticulum lumen. The enzyme catalyses Catalyzes the rearrangement of -S-S- bonds in proteins.. Acts as a protein-folding catalyst that interacts with nascent polypeptides to catalyze the formation, isomerization, and reduction or oxidation of disulfide bonds. May play a role in storage protein biogenesis. This chain is Protein disulfide isomerase-like 1-5 (PDIL1-5), found in Oryza sativa subsp. japonica (Rice).